A 556-amino-acid polypeptide reads, in one-letter code: Glutamine--tRNA ligase (556 aa).

The 'HIGH' region motif lies at 34 to 44; sequence PEPNGYLHIGH. ATP-binding positions include 35–37 and 41–47; these read EPN and HIGHAKS. Residues Asp67 and Tyr212 each contribute to the L-glutamine site. Residues Thr231, 261-262, and 269-271 each bind ATP; these read RL and MSK. A 'KMSKS' region motif is present at residues 268-272; sequence VMSKR.

This sequence belongs to the class-I aminoacyl-tRNA synthetase family. In terms of assembly, monomer.

The protein resides in the cytoplasm. The catalysed reaction is tRNA(Gln) + L-glutamine + ATP = L-glutaminyl-tRNA(Gln) + AMP + diphosphate. In Vibrio cholerae serotype O1 (strain ATCC 39315 / El Tor Inaba N16961), this protein is Glutamine--tRNA ligase.